We begin with the raw amino-acid sequence, 214 residues long: Phosphatidylserine decarboxylase proenzyme (214 aa).

The Schiff-base intermediate with substrate; via pyruvic acid role is filled by Ser-182. The residue at position 182 (Ser-182) is a Pyruvic acid (Ser); by autocatalysis.

It belongs to the phosphatidylserine decarboxylase family. PSD-A subfamily. Heterodimer of a large membrane-associated beta subunit and a small pyruvoyl-containing alpha subunit. Pyruvate serves as cofactor. Is synthesized initially as an inactive proenzyme. Formation of the active enzyme involves a self-maturation process in which the active site pyruvoyl group is generated from an internal serine residue via an autocatalytic post-translational modification. Two non-identical subunits are generated from the proenzyme in this reaction, and the pyruvate is formed at the N-terminus of the alpha chain, which is derived from the carboxyl end of the proenzyme. The post-translation cleavage follows an unusual pathway, termed non-hydrolytic serinolysis, in which the side chain hydroxyl group of the serine supplies its oxygen atom to form the C-terminus of the beta chain, while the remainder of the serine residue undergoes an oxidative deamination to produce ammonia and the pyruvoyl prosthetic group on the alpha chain.

It is found in the cell membrane. It carries out the reaction a 1,2-diacyl-sn-glycero-3-phospho-L-serine + H(+) = a 1,2-diacyl-sn-glycero-3-phosphoethanolamine + CO2. It functions in the pathway phospholipid metabolism; phosphatidylethanolamine biosynthesis; phosphatidylethanolamine from CDP-diacylglycerol: step 2/2. Its function is as follows. Catalyzes the formation of phosphatidylethanolamine (PtdEtn) from phosphatidylserine (PtdSer). This is Phosphatidylserine decarboxylase proenzyme from Burkholderia cenocepacia (strain ATCC BAA-245 / DSM 16553 / LMG 16656 / NCTC 13227 / J2315 / CF5610) (Burkholderia cepacia (strain J2315)).